The following is a 478-amino-acid chain: Transcript termination protein A18 (478 aa).

The Helicase ATP-binding domain occupies 98-254 (KLSTHRPMYM…NDVVNVLKVS (157 aa)). ATP is bound at residue 111 to 118 (LSCGFGKT). Residues 204-207 (DESH) carry the DESH box motif. In terms of domain architecture, Helicase C-terminal spans 302–454 (PRNNLIVDTV…IVSVSTDKLG (153 aa)). The interval 456 to 478 (QQEGKEGTKEEPALTKAFSSQIR) is disordered. A compositionally biased stretch (basic and acidic residues) spans 458-468 (EGKEGTKEEPA).

Belongs to the helicase family. Poxviruses subfamily. In terms of assembly, interacts with G2. Might be part of a transcription complex composed at least of G2, A18, and H5.

The protein resides in the virion. DNA helicase which seems to act as a postreplicative transcription termination factor. Involved in ATP-dependent release of nascent RNA. Forms a stable complex with single-stranded DNA, and to a lesser extent RNA. In Oryctolagus cuniculus (Rabbit), this protein is Transcript termination protein A18.